The sequence spans 443 residues: MLPAECSRRLVAELRDALDSCAERQRQLEQSLRVSRRLLRVWEPAETPAPEPTPGSEINKEAPSSACPPSPQDLKELELLTQALEKAVRVRKGLSKAGEGVKARSLKSGSASTATKASAPPSTSRCTGSRAPETKPPRGVHHPWVPAKDLPGHRLLLVGDGAHMGQGAGANKPEAGLRDQQIVPQAASQVPEAFTLKDKGALLRLPEAFRKAASRNARLPMCASSLWAQLSSMQTRDSVDAAAATAKTQFLQKMQTAAGLPSSMLSAAEVGRLQKACSMLRLRMREELTADPKDWTQEYRSLLTLEGLQALAGQCLHRLQELQELRSAVVEQPQGPWPEGPPRAALPCGGGADPVWSPQLLLYSSTQELQTLAALRLRVAMLDQQVHLEKVLMAELLPLLSEQEPLGRPWLALCRAAHCLLCEGGQRFLTVLQDEPADRLSPP.

A coiled-coil region spans residues 8–33 (RRLVAELRDALDSCAERQRQLEQSLR). 2 disordered regions span residues 45–72 (AETP…PSPQ) and 93–146 (GLSK…PWVP). The span at 106 to 124 (LKSGSASTATKASAPPSTS) shows a compositional bias: low complexity.

As to quaternary structure, interacts with TEDC1. Found in a complex with TEDC1, TEDC2, TUBE1 and TUBD1.

Its subcellular location is the cell projection. The protein resides in the cilium. It localises to the cytoplasm. The protein localises to the cytoskeleton. It is found in the microtubule organizing center. Its subcellular location is the centrosome. The protein resides in the centriole. In terms of biological role, acts as a positive regulator of ciliary hedgehog signaling. Required for centriole stability. The protein is Tubulin epsilon and delta complex protein 2 of Bos taurus (Bovine).